The primary structure comprises 396 residues: MAKEKFDRSKTHANIGTIGHVDHGKTTLTAAITTVLAKRSGKGQAMAYDAIDGAPEERERGITISTAHVEYETDSRHYAHVDCPGHADYVKNMITGAAQMDGGILVVSAADGPMPQTREHILLSRNVGVPYLVVFLNKCDMVDDEELLELVEMEVRDLLSEYDFPGDDVPVIQGSALKALQGEAEWEEKIIELMNAVDEYIPTPERDKDKPFMMPVEDVFSITGRGTVATGRVERGQLNVGDTVEILGINEEKKSTTVTGVEMFRKLLDYAEAGDNIGALLRGVSREEIQRGQVLAKPGTITPHTKFTAEVYVLSKDEGGRHTPFFSNYRPQFYFRTTDVTGVVHLPEGTEMVMPGDNTEMTVELIAPIAIEEGTRFSIREGGRTVGSGVVSTITE.

Residues 10–205 (KTHANIGTIG…AVDEYIPTPE (196 aa)) enclose the tr-type G domain. A G1 region spans residues 19–26 (GHVDHGKT). 19–26 (GHVDHGKT) is a GTP binding site. Mg(2+) is bound at residue Thr-26. The tract at residues 61–65 (GITIS) is G2. The interval 82–85 (DCPG) is G3. GTP contacts are provided by residues 82–86 (DCPGH) and 137–140 (NKCD). Positions 137 to 140 (NKCD) are G4. Positions 175 to 177 (SAL) are G5.

This sequence belongs to the TRAFAC class translation factor GTPase superfamily. Classic translation factor GTPase family. EF-Tu/EF-1A subfamily. In terms of assembly, monomer.

It is found in the cytoplasm. The catalysed reaction is GTP + H2O = GDP + phosphate + H(+). GTP hydrolase that promotes the GTP-dependent binding of aminoacyl-tRNA to the A-site of ribosomes during protein biosynthesis. This is Elongation factor Tu from Shouchella clausii (strain KSM-K16) (Alkalihalobacillus clausii).